Consider the following 376-residue polypeptide: NifS-like protein (376 aa).

Pyridoxal 5'-phosphate-binding positions include 58 to 59 (SE) and 184 to 186 (SLN).

This sequence belongs to the class-V pyridoxal-phosphate-dependent aminotransferase family. NifS/IscS subfamily. Pyridoxal 5'-phosphate is required as a cofactor.

The protein localises to the virion. The polypeptide is NifS-like protein (African swine fever virus (isolate Tick/Malawi/Lil 20-1/1983) (ASFV)).